The chain runs to 254 residues: Dihydroorotate dehydrogenase B (NAD(+)), electron transfer subunit (254 aa).

The FAD-binding FR-type domain occupies 1–99; the sequence is MLQTEMKVIQ…LGPLGKGFDL (99 aa). Residues 50–53, 67–69, and 74–75 each bind FAD; these read RPIS, LYR, and GT. The [2Fe-2S] cluster site is built by Cys218, Cys223, Cys226, and Cys241.

It belongs to the PyrK family. Heterotetramer of 2 PyrK and 2 PyrD type B subunits. Requires [2Fe-2S] cluster as cofactor. It depends on FAD as a cofactor.

It functions in the pathway pyrimidine metabolism; UMP biosynthesis via de novo pathway; orotate from (S)-dihydroorotate (NAD(+) route): step 1/1. Functionally, responsible for channeling the electrons from the oxidation of dihydroorotate from the FMN redox center in the PyrD type B subunit to the ultimate electron acceptor NAD(+). The sequence is that of Dihydroorotate dehydrogenase B (NAD(+)), electron transfer subunit from Listeria innocua serovar 6a (strain ATCC BAA-680 / CLIP 11262).